We begin with the raw amino-acid sequence, 862 residues long: Leucine--tRNA ligase (862 aa).

A 'HIGH' region motif is present at residues 42–52 (PYPSGKIHIGH). Positions 614-618 (KMSKS) match the 'KMSKS' region motif. Position 617 (Lys617) interacts with ATP.

The protein belongs to the class-I aminoacyl-tRNA synthetase family.

Its subcellular location is the cytoplasm. The catalysed reaction is tRNA(Leu) + L-leucine + ATP = L-leucyl-tRNA(Leu) + AMP + diphosphate. In Syntrophus aciditrophicus (strain SB), this protein is Leucine--tRNA ligase.